The following is a 1161-amino-acid chain: Hamartin (1161 aa).

Residue Lys30 forms a Glycyl lysine isopeptide (Lys-Gly) (interchain with G-Cter in ubiquitin) linkage. Disordered regions lie at residues 296–336 and 353–591; these read PYVD…PSTR and CGMT…QRGV. The span at 303–336 shows a compositional bias: low complexity; the sequence is SYGGSTSTPSSSSRLMLFSPPGQLPQSLSSPSTR. Positions 393-402 are enriched in pro residues; it reads TSPPPAPPCP. The tract at residues 403-784 is mediates interaction with WDR45B; it reads QDDCVHGSAA…QIRQLQHDRE (382 aa). Residues 471-484 are compositionally biased toward basic and acidic residues; the sequence is EKDKEEAAISKELS. 6 positions are modified to phosphoserine: Ser484, Ser502, Ser508, Ser518, Ser592, and Ser595. The segment covering 509 to 529 has biased composition (polar residues); sequence LSGSQRKTHSAASGTQGSSVN. Coiled coils occupy residues 721–849, 879–917, and 967–991; these read IRAA…NRQL, TAYRKELEKNRSHLLQQNQRLDASQRRVLELESLLAKKD, and EKDGRLRKLEEDRAEAAEAAEERLD. 2 disordered regions span residues 1003–1077 and 1092–1161; these read GHNE…SLPS and NKSE…PEHS. The segment covering 1004–1017 has biased composition (basic and acidic residues); it reads HNEEASGHNGETRT. Residues 1026-1043 are compositionally biased toward low complexity; sequence SCGGRVTGGSSSSSSELS. The segment covering 1064–1077 has biased composition (polar residues); it reads PSSSIPTTVGSLPS. Ser1094 carries the post-translational modification Phosphoserine. Low complexity predominate over residues 1103-1113; the sequence is VTMSSSSLSET. 2 stretches are compositionally biased toward basic and acidic residues: residues 1114 to 1124 and 1152 to 1161; these read LKTELGKDSGT and DYNETHPEHS.

In terms of assembly, component of the TSC-TBC complex (also named Rhebulator complex), composed of 2 molecules of TSC1, 2 molecules of TSC2 and 1 molecule of TBC1D7. Probably forms a complex composed of chaperones HSP90 and HSP70, co-chaperones STIP1/HOP, CDC37, PPP5C, PTGES3/p23, TSC1 and client protein TSC2. Forms a complex composed of chaperones HSP90 and HSP70, co-chaperones CDC37, PPP5C, TSC1 and client protein TSC2, CDK4, AKT, RAF1 and NR3C1; this complex does not contain co-chaperones STIP1/HOP and PTGES3/p23. Forms a complex containing HSP90AA1, TSC1 and TSC2; TSC1 is required to recruit TCS2 to the complex. Interacts (via C-terminus) with the closed form of HSP90AA1 (via the middle domain and TPR repeat-binding motif). Interacts with DOCK7. Interacts with FBXW5. Interacts with WDR45B. Interacts with RPAP3 and URI1. Phosphorylation at Ser-502 does not affect interaction with TSC2. Post-translationally, 'Lys-63'-linked ubiquitinated at Lys-30 by PELI1; the ubiquitination promotes TSC1/TSC2 complex stability.

It localises to the lysosome membrane. Its subcellular location is the cytoplasm. It is found in the cytosol. Non-catalytic component of the TSC-TBC complex, a multiprotein complex that acts as a negative regulator of the canonical mTORC1 complex, an evolutionarily conserved central nutrient sensor that stimulates anabolic reactions and macromolecule biosynthesis to promote cellular biomass generation and growth. The TSC-TBC complex acts as a GTPase-activating protein (GAP) for the small GTPase RHEB, a direct activator of the protein kinase activity of mTORC1. In absence of nutrients, the TSC-TBC complex inhibits mTORC1, thereby preventing phosphorylation of ribosomal protein S6 kinase (RPS6KB1 and RPS6KB2) and EIF4EBP1 (4E-BP1) by the mTORC1 signaling. The TSC-TBC complex is inactivated in response to nutrients, relieving inhibition of mTORC1. Within the TSC-TBC complex, TSC1 stabilizes TSC2 and prevents TSC2 self-aggregation. Involved in microtubule-mediated protein transport via its ability to regulate mTORC1 signaling. Also acts as a co-chaperone for HSP90AA1 facilitating HSP90AA1 chaperoning of protein clients such as kinases, TSC2 and glucocorticoid receptor NR3C1. Increases ATP binding to HSP90AA1 and inhibits HSP90AA1 ATPase activity. Competes with the activating co-chaperone AHSA1 for binding to HSP90AA1, thereby providing a reciprocal regulatory mechanism for chaperoning of client proteins. Recruits TSC2 to HSP90AA1 and stabilizes TSC2 by preventing the interaction between TSC2 and ubiquitin ligase HERC1. In Mus musculus (Mouse), this protein is Hamartin.